We begin with the raw amino-acid sequence, 327 residues long: GTPase Obg (327 aa).

Residues Met-1–Leu-159 enclose the Obg domain. Residues Ala-160–Ile-327 form the OBG-type G domain. ATP contacts are provided by residues Gly-166–Ser-173, Phe-191–Ile-195, Asp-213–Gly-216, Asn-280–Glu-283, and Ser-309–Ser-311. Mg(2+) is bound by residues Ser-173 and Thr-193.

It belongs to the TRAFAC class OBG-HflX-like GTPase superfamily. OBG GTPase family. As to quaternary structure, monomer. The cofactor is Mg(2+).

The protein resides in the cytoplasm. In terms of biological role, an essential GTPase which binds GTP, GDP and possibly (p)ppGpp with moderate affinity, with high nucleotide exchange rates and a fairly low GTP hydrolysis rate. Plays a role in control of the cell cycle, stress response, ribosome biogenesis and in those bacteria that undergo differentiation, in morphogenesis control. This Prochlorococcus marinus (strain MIT 9301) protein is GTPase Obg.